The following is a 921-amino-acid chain: MASNILTQIFGSRNDRLLKTYRKIVDRINALETQYEQLGDDELRAKTQEFKNRVAAGEALDAILPEAFAVVREGSKRVMKMRHFDVQMLGGISLHNGKISEMRTGEGKTLTATLPVYLNALTGKGVHVVTVNDYLASRDARWMGKLYNFLGLTVGINLPNMSREEKQAAYNADITYGTNNEYGFDYLRDNMVYEVGDRVQRGLNYAIVDEVDSILIDEARTPLIISGQAEDHTEMYLAMNKVVPLLTRQEGEADPRTGEGVTKPGDFTIDEKTRQVFLTEQGHESAERILFNLGLIAESATLYDPANISLMHHLYAALRANLLYHRDQHYVVQDGEVVIVDEFTGRLMSGRRWSDGLHQAVEAKEGVQIQAENQTLASITFQNYFRLYGKLAGMTGTADTEAYEFQEIYGLETTVIPPNRVSRRDDQLDRVYKTTREKYEAAIKDIRECYERGQPVLVGTTSIENSEIIDQLLEKEKLPHQVLNAKQHAREADIVAQAGRLKVITIATNMAGRGTDIVLGGNLEKLIEAVEADESMDTAAKEAEIARLRARWSEEHEQVKALGGLRIIATERHESRRIDNQLRGRSGRQGDPGSSRFYLSLDDPLMRIFAGDRVKAIMERLKMPDGEAIEAGIVTRSIESAQRKVEARNFDIRKQLLEYDDVANDQRKVIYQQRNDIMDAGSLQAQIESLREGCFTDLTRQYVPAESVEEQWDIAGLEKVLLEEWQISLPLAGELESATAITDEDILEKVIAAANVAFADKVEKIGQENFTQFERLVLLQSIDTHWREHLSALDYLRQGIHLRGYAQKQPKQEYKREAFELFGQLLDSVKNEVTKVLMTVKIQSGEQLEQAAEEMENRAESISNVTYTAPTETGEAETRVDEDTLRRVSLASGIAVPRVGRNDPCPCGSGKKYKLCHGRLN.

Residues Q87, 105 to 109, and D516 each bind ATP; that span reads GEGKT. 4 residues coordinate Zn(2+): C905, C907, C916, and H917.

This sequence belongs to the SecA family. As to quaternary structure, monomer and homodimer. Part of the essential Sec protein translocation apparatus which comprises SecA, SecYEG and auxiliary proteins SecDF-YajC and YidC. The cofactor is Zn(2+).

It localises to the cell inner membrane. The protein localises to the cytoplasm. It catalyses the reaction ATP + H2O + cellular proteinSide 1 = ADP + phosphate + cellular proteinSide 2.. Its function is as follows. Part of the Sec protein translocase complex. Interacts with the SecYEG preprotein conducting channel. Has a central role in coupling the hydrolysis of ATP to the transfer of proteins into and across the cell membrane, serving both as a receptor for the preprotein-SecB complex and as an ATP-driven molecular motor driving the stepwise translocation of polypeptide chains across the membrane. This is Protein translocase subunit SecA from Polaromonas sp. (strain JS666 / ATCC BAA-500).